The chain runs to 54 residues: IVTVDCSDYPKPVCTLDYMPLCGSDNKTYSNKCNFCNAVVDSNGTITLSHFGRC.

In terms of domain architecture, Kazal-like spans 4–54 (VDCSDYPKPVCTLDYMPLCGSDNKTYSNKCNFCNAVVDSNGTITLSHFGRC). Intrachain disulfides connect cysteine 6/cysteine 36, cysteine 14/cysteine 33, and cysteine 22/cysteine 54. N-linked (GlcNAc...) asparagine glycosylation is present at asparagine 43.

Its subcellular location is the secreted. This is Ovomucoid from Coloeus monedula (Eurasian jackdaw).